The primary structure comprises 470 residues: tRNA (guanine(37)-N(1))-methyltransferase (470 aa).

S-adenosyl-L-methionine-binding positions include Asp-304–Leu-305, Asp-332–Gly-333, and Asn-370.

It belongs to the class I-like SAM-binding methyltransferase superfamily. TRM5/TYW2 family. As to quaternary structure, monomer.

Its subcellular location is the mitochondrion matrix. It localises to the nucleus. The protein resides in the cytoplasm. The enzyme catalyses guanosine(37) in tRNA + S-adenosyl-L-methionine = N(1)-methylguanosine(37) in tRNA + S-adenosyl-L-homocysteine + H(+). Functionally, specifically methylates the N1 position of guanosine-37 in various cytoplasmic and mitochondrial tRNAs. Methylation is not dependent on the nature of the nucleoside 5' of the target nucleoside. This is the first step in the biosynthesis of wybutosine (yW), a modified base adjacent to the anticodon of tRNAs and required for accurate decoding. The polypeptide is tRNA (guanine(37)-N(1))-methyltransferase (Theileria parva (East coast fever infection agent)).